We begin with the raw amino-acid sequence, 363 residues long: Phosphoribosylformylglycinamidine cyclo-ligase (363 aa).

This sequence belongs to the AIR synthase family.

The protein resides in the cytoplasm. It carries out the reaction 2-formamido-N(1)-(5-O-phospho-beta-D-ribosyl)acetamidine + ATP = 5-amino-1-(5-phospho-beta-D-ribosyl)imidazole + ADP + phosphate + H(+). Its pathway is purine metabolism; IMP biosynthesis via de novo pathway; 5-amino-1-(5-phospho-D-ribosyl)imidazole from N(2)-formyl-N(1)-(5-phospho-D-ribosyl)glycinamide: step 2/2. The chain is Phosphoribosylformylglycinamidine cyclo-ligase from Bartonella tribocorum (strain CIP 105476 / IBS 506).